The sequence spans 662 residues: MSDLFSLNKEKKNKIVYTNYSAKDIEVLDGLEPVRKRPGMYIGGTDSNAMHHLVSEVLDNAMDEAVAGFASIIMIKMHQDHSITIFDNGRGIPIDNHPKFPDKSALEVILTTLHSGSKFSNNVYHTSGGLHGVGISVVNALSKHFKIKVYKQGKLYSQSYSKGAKLTDLISAEASKRLRGTSINFTPDPEIFSEKLHFNPKKIYEIARSKAYLYRGVSIEWECEVEVPSDIPKKALINFPNGLKDYLSSKISLDNLVIPEIFSGNIESTVDDIKLEWAICWQNNDTSAFMQSYCNTVPTPQGGTHEQGLKSAILRGLKAYSEMIGNKKAANLTIEDILETASIVLSIFIVEPSFQGQTKEKLVSNGVSKLVENIIKDHFDHFLSSDKVLATHLLEHVIAIAEFRRNKKNERNISRKSVTQKLRLPGKLADCTRTSAEGTELFIVEGDSAGGSAKQARNRETQAVLPLWGKVLNVASSTLEKIINNQAIQDLEIALACGSLKNYKKENLRYEKIIIMTDADVDGAHIASLLMTFFFLRMPKLVEEGHLYLAKPPLYRLTQSNKIYYACDEEEKIKLTYKLSKASKAKIEVGRFKGLGEMMPAQLKETTMHPEKRSLLKVTLEDVQNVDKIVDDLMGKKPEKRFQFIYEQALVKMDQIINKLDI.

ATP contacts are provided by residues Tyr20, Asn60, Asp87, 129 to 135 (GLHGVGI), and Lys359. The 115-residue stretch at 439–553 (TELFIVEGDS…EGHLYLAKPP (115 aa)) folds into the Toprim domain. Residues Glu445, Asp518, and Asp520 each coordinate Mg(2+).

Belongs to the type II topoisomerase family. ParE type 1 subfamily. As to quaternary structure, heterotetramer composed of ParC and ParE. Mg(2+) is required as a cofactor. It depends on Mn(2+) as a cofactor. Ca(2+) serves as cofactor.

It catalyses the reaction ATP-dependent breakage, passage and rejoining of double-stranded DNA.. Topoisomerase IV is essential for chromosome segregation. It relaxes supercoiled DNA. Performs the decatenation events required during the replication of a circular DNA molecule. This Rickettsia prowazekii (strain Madrid E) protein is DNA topoisomerase 4 subunit B.